Consider the following 447-residue polypeptide: Probable glycosyltransferase 7 (447 aa).

The segment at 1–31 is disordered; it reads MRATTGARHLHPPWRRGLRHHRQSTMPPRAS. Topologically, residues 1 to 37 are cytoplasmic; the sequence is MRATTGARHLHPPWRRGLRHHRQSTMPPRASRGRLAD. A compositionally biased stretch (basic residues) spans 8–23; that stretch reads RHLHPPWRRGLRHHRQ. The helical; Signal-anchor for type II membrane protein transmembrane segment at 38-60 threads the bilayer; the sequence is AALFTAGAVLGSVLLLTLASPFS. Residues 61–447 are Lumenal-facing; sequence SSSSPSSGVG…LPFDHPTQTA (387 aa). Residues Asn-285 and Asn-329 are each glycosylated (N-linked (GlcNAc...) asparagine).

Belongs to the glycosyltransferase 34 family.

It localises to the golgi apparatus membrane. Probable glycosyltransferase that may be involved in the biosynthesis of xyloglucan. This is Probable glycosyltransferase 7 from Oryza sativa subsp. indica (Rice).